Consider the following 1893-residue polypeptide: Endoribonuclease Dicer (1893 aa).

The Helicase ATP-binding domain occupies 41-217; sequence LLEAALDHNT…DLEEKIQKLE (177 aa). Residue 54–61 participates in ATP binding; that stretch reads LNSGSGKT. Residues 165–168 carry the DECH box motif; that stretch reads DECH. A disordered region spans residues 400-424; that stretch reads VSWSDSEDDDDEDEEIEEKEKTETS. Positions 404 to 416 are enriched in acidic residues; it reads DSEDDDDEDEEIE. The Helicase C-terminal domain maps to 424 to 593; it reads SFPSPFTNIL…SIDCGNTESE (170 aa). Residues 621–713 enclose the Dicer dsRNA-binding fold domain; the sequence is AIGHINRYCA…MPVGKETVKY (93 aa). Residues 718–737 form a disordered region; that stretch reads DLHDEEETSVPGRPGSTKRR. The PAZ domain maps to 886-1036; sequence KFVEDIEKSE…LVPELCAIHP (151 aa). 2 consecutive RNase III domains span residues 1249-1380 and 1637-1795; these read TSDM…ETSG and FENF…MDSG. 6 residues coordinate Mg(2+): glutamate 1293, aspartate 1371, glutamate 1374, glutamate 1676, aspartate 1781, and glutamate 1784. The DRBM domain maps to 1820-1885; the sequence is VPRSPVRELL…ARRALRSLKA (66 aa).

This sequence belongs to the helicase family. Dicer subfamily. As to quaternary structure, component of the RISC loading complex (RLC), or micro-RNA (miRNA) loading complex (miRLC), which is composed of dicer1, ago2 and tarbp2; dicer1 and tarbp2 are required to process precursor miRNAs (pre-miRNAs) to mature miRNAs and then load them onto ago2. Note that the trimeric RLC/miRLC is also referred to as RISC. Mg(2+) is required as a cofactor. The cofactor is Mn(2+).

The protein resides in the cytoplasm. The enzyme catalyses Endonucleolytic cleavage to 5'-phosphomonoester.. Double-stranded RNA (dsRNA) endoribonuclease playing a central role in short dsRNA-mediated post-transcriptional gene silencing. Cleaves naturally occurring long dsRNAs and short hairpin pre-microRNAs (miRNA) into fragments of twenty-one to twenty-three nucleotides with 3' overhang of two nucleotides, producing respectively short interfering RNAs (siRNA) and mature microRNAs. SiRNAs and miRNAs serve as guide to direct the RNA-induced silencing complex (RISC) to complementary RNAs to degrade them or prevent their translation. Gene silencing mediated by siRNAs, also called RNA interference, controls the elimination of transcripts from mobile and repetitive DNA elements of the genome but also the degradation of exogenous RNA of viral origin for instance. The miRNA pathway on the other side is a mean to specifically regulate the expression of target genes. The sequence is that of Endoribonuclease Dicer (dicer1) from Xenopus tropicalis (Western clawed frog).